The chain runs to 612 residues: T-cell immunomodulatory protein (612 aa).

A signal peptide spans 1 to 33; sequence MAAAGRLPSSWALFSPLLAGLALLGVGPVPARA. N-linked (GlcNAc...) asparagine glycans are attached at residues Asn36, Asn95, Asn139, Asn146, Asn151, Asn176, Asn188, Asn226, and Asn243. Residues 258–293 form an FG-GAP; atypical repeat; the sequence is VVGQSAFADFDGDGHMDHLLPGCEDKNCQKSTIYLV. Asn353, Asn371, and Asn482 each carry an N-linked (GlcNAc...) asparagine glycan. A helical transmembrane segment spans residues 567–587; it reads VLLTAIALIGVCVFILAIIGI.

This sequence belongs to the TIP family. As to quaternary structure, interacts with RUVBL1, RUVBL2 and alpha-tubulin. In terms of tissue distribution, ubiquitously expressed.

It is found in the secreted. Its subcellular location is the membrane. Its function is as follows. Modulator of T-cell function. Has a protective effect in graft versus host disease model. The polypeptide is T-cell immunomodulatory protein (Homo sapiens (Human)).